Reading from the N-terminus, the 484-residue chain is Probable glycine dehydrogenase (decarboxylating) subunit 2 (484 aa).

Position 270 is an N6-(pyridoxal phosphate)lysine (K270).

It belongs to the GcvP family. C-terminal subunit subfamily. As to quaternary structure, the glycine cleavage system is composed of four proteins: P, T, L and H. In this organism, the P 'protein' is a heterodimer of two subunits. Pyridoxal 5'-phosphate is required as a cofactor.

The enzyme catalyses N(6)-[(R)-lipoyl]-L-lysyl-[glycine-cleavage complex H protein] + glycine + H(+) = N(6)-[(R)-S(8)-aminomethyldihydrolipoyl]-L-lysyl-[glycine-cleavage complex H protein] + CO2. Functionally, the glycine cleavage system catalyzes the degradation of glycine. The P protein binds the alpha-amino group of glycine through its pyridoxal phosphate cofactor; CO(2) is released and the remaining methylamine moiety is then transferred to the lipoamide cofactor of the H protein. The chain is Probable glycine dehydrogenase (decarboxylating) subunit 2 from Desulforamulus reducens (strain ATCC BAA-1160 / DSM 100696 / MI-1) (Desulfotomaculum reducens).